Here is a 562-residue protein sequence, read N- to C-terminus: Adenylate kinase isoenzyme 5 (562 aa).

2 adenylate kinase regions span residues 133–316 (KIIL…MAVD) and 377–559 (KIIF…TAID). Residue 142-147 (GSGKGT) participates in ATP binding. The segment at 162 to 193 (SVGELLRKKIHSTSSNRKWSLIAKIITTGELA) is NMP 1. AMP is bound by residues R168, 191–193 (ELA), 219–222 (GFPR), and Q226. Positions 256–266 (KRAEQQGRPDD) are LID 1. R257 contacts ATP. 2 residues coordinate AMP: R263 and R274. 386-391 (GSGKGT) serves as a coordination point for ATP. An NMP 2 region spans residues 406–435 (STGELLREELASESERSKLIRDIMERGDLV). AMP contacts are provided by residues T407, R412, 433–435 (DLV), 462–465 (GYPR), and Q469. The tract at residues 499–509 (QRSRSSLPVDD) is LID 2. Residue R500 participates in ATP binding. R517 is an AMP binding site. G545 is an ATP binding site.

This sequence belongs to the adenylate kinase family. Monomer. Interacts with YWHAZ. As to expression, brain specific.

Its subcellular location is the cytoplasm. It catalyses the reaction AMP + ATP = 2 ADP. It carries out the reaction a 2'-deoxyribonucleoside 5'-diphosphate + ATP = a 2'-deoxyribonucleoside 5'-triphosphate + ADP. The catalysed reaction is a ribonucleoside 5'-diphosphate + ATP = a ribonucleoside 5'-triphosphate + ADP. Its function is as follows. Nucleoside monophosphate (NMP) kinase that catalyzes the reversible transfer of the terminal phosphate group between nucleoside triphosphates and monophosphates. Active on AMP and dAMP with ATP as a donor. When GTP is used as phosphate donor, the enzyme phosphorylates AMP, CMP, and to a small extent dCMP. Also displays broad nucleoside diphosphate kinase activity. The protein is Adenylate kinase isoenzyme 5 (AK5) of Homo sapiens (Human).